Consider the following 211-residue polypeptide: Ribosome maturation factor RimM (211 aa).

One can recognise a PRC barrel domain in the interval 111-182 (PDAWYDHQLV…TLVITPPLGL (72 aa)). Positions 184–211 (EEIPDEQPTPSATSDAEPGSAPEGDDAR) are disordered.

The protein belongs to the RimM family. As to quaternary structure, binds ribosomal protein uS19.

It is found in the cytoplasm. Functionally, an accessory protein needed during the final step in the assembly of 30S ribosomal subunit, possibly for assembly of the head region. Essential for efficient processing of 16S rRNA. May be needed both before and after RbfA during the maturation of 16S rRNA. It has affinity for free ribosomal 30S subunits but not for 70S ribosomes. This is Ribosome maturation factor RimM from Clavibacter sepedonicus (Clavibacter michiganensis subsp. sepedonicus).